A 321-amino-acid chain; its full sequence is Basic peroxidase (321 aa).

A signal peptide spans Met-1 to Ala-30. A Pyrrolidone carboxylic acid modification is found at Gln-31. Disulfide bonds link Cys-41-Cys-117, Cys-74-Cys-79, Cys-123-Cys-317, and Cys-202-Cys-228. The active-site Proton acceptor is the His-72. Ca(2+) is bound by residues Asp-73, Val-76, Gly-78, Asp-80, and Ser-82. Pro-165 serves as a coordination point for substrate. Residue His-195 participates in heme b binding. Thr-196 is a Ca(2+) binding site. N-linked (GlcNAc...) asparagine glycans are attached at residues Asn-211 and Asn-221. Asp-241, Thr-244, and Asp-249 together coordinate Ca(2+).

Belongs to the peroxidase family. Classical plant (class III) peroxidase subfamily. Heme b is required as a cofactor. Requires Ca(2+) as cofactor. N-glycosylated. As to expression, expressed in tracheary elements, roots, young and old hypocotyls, and stems in the partially glycosylated form and in roots and young hypocotyls in the fully glycosylated form. None of the isoforms is significantly expressed in leaves or cotyledons.

It localises to the secreted. The enzyme catalyses 2 a phenolic donor + H2O2 = 2 a phenolic radical donor + 2 H2O. Functionally, removal of H(2)O(2), oxidation of toxic reductants, biosynthesis and degradation of lignin, suberization, auxin catabolism, response to environmental stresses such as wounding, pathogen attack and oxidative stress. These functions might be dependent on each isozyme/isoform in each plant tissue. Involved in the synthesis of highly polymerized lignins. The sequence is that of Basic peroxidase (POD1) from Zinnia elegans (Garden zinnia).